The chain runs to 181 residues: Peptidyl-tRNA hydrolase (181 aa).

Position 14 (Y14) interacts with tRNA. The active-site Proton acceptor is the H19. TRNA contacts are provided by F60, N62, and N106.

The protein belongs to the PTH family. In terms of assembly, monomer.

Its subcellular location is the cytoplasm. The catalysed reaction is an N-acyl-L-alpha-aminoacyl-tRNA + H2O = an N-acyl-L-amino acid + a tRNA + H(+). In terms of biological role, hydrolyzes ribosome-free peptidyl-tRNAs (with 1 or more amino acids incorporated), which drop off the ribosome during protein synthesis, or as a result of ribosome stalling. Catalyzes the release of premature peptidyl moieties from peptidyl-tRNA molecules trapped in stalled 50S ribosomal subunits, and thus maintains levels of free tRNAs and 50S ribosomes. This is Peptidyl-tRNA hydrolase from Campylobacter curvus (strain 525.92).